The primary structure comprises 222 residues: Putative serine proteinase inhibitor 2 homolog second part (222 aa).

Belongs to the serpin family. Poxviruses subfamily.

This is Putative serine proteinase inhibitor 2 homolog second part from Homo sapiens (Human).